Reading from the N-terminus, the 459-residue chain is ATP-dependent protease ATPase subunit HslU (459 aa).

Residues Val-18, 60–65, Asp-272, Glu-337, and Arg-409 contribute to the ATP site; that span reads GVGKTE.

This sequence belongs to the ClpX chaperone family. HslU subfamily. In terms of assembly, a double ring-shaped homohexamer of HslV is capped on each side by a ring-shaped HslU homohexamer. The assembly of the HslU/HslV complex is dependent on binding of ATP.

It localises to the cytoplasm. Its function is as follows. ATPase subunit of a proteasome-like degradation complex; this subunit has chaperone activity. The binding of ATP and its subsequent hydrolysis by HslU are essential for unfolding of protein substrates subsequently hydrolyzed by HslV. HslU recognizes the N-terminal part of its protein substrates and unfolds these before they are guided to HslV for hydrolysis. The chain is ATP-dependent protease ATPase subunit HslU from Thermoanaerobacter sp. (strain X514).